The chain runs to 602 residues: Spermidine-citrate ligase (602 aa).

Residues 286–288, Lys300, and Arg312 contribute to the ATP site; that span reads SLR.

Belongs to the IucA/IucC family.

The enzyme catalyses spermidine + citrate + ATP = N(8)-citryl-spermidine + AMP + diphosphate + H(+). It functions in the pathway siderophore biosynthesis; petrobactin biosynthesis. Functionally, involved in the biosynthesis of petrobactin, a catecholate siderophore that functions in both iron acquisition and virulence. Catalyzes the ATP-dependent condensation of citric acid and spermidine to form N(8)-citryl-spermidine. It can also catalyze the condensation of several di- and triamine analogs of spermidine with citric acid and the condensation of the citric acid analog tricarballylic acid with spermidine. Required for growth in iron-depleted medium and for full virulence in a mouse model of infection. The chain is Spermidine-citrate ligase from Bacillus anthracis.